The chain runs to 189 residues: Casparian strip membrane protein 2 (189 aa).

The segment at 1-21 (MKVSTIESGEISKGASSPRKG) is disordered. At 1–25 (MKVSTIESGEISKGASSPRKGMKRG) the chain is on the cytoplasmic side. The chain crosses the membrane as a helical span at residues 26-46 (LSIMDFILRIFAAMSTLGSAL). The Extracellular portion of the chain corresponds to 47–73 (SMGTAKQTMPFATRFVRFKVSFHDLPT). The helical transmembrane segment at 74 to 94 (FLFFVTANSIVCGYLALSLVL) threads the bilayer. The Cytoplasmic segment spans residues 95–108 (SFFHIVRTISVKSR). A helical transmembrane segment spans residues 109 to 129 (ILLVFLDTVMFGLLTSGASAA). Topologically, residues 130 to 163 (AAIVYVAHYGNPSANWFPFCQQYNSFCGRISGSL) are extracellular. The chain crosses the membrane as a helical span at residues 164–184 (VGSFIAVVIFMILILMSGISI). Residues 185–189 (SKSKH) are Cytoplasmic-facing.

It belongs to the Casparian strip membrane proteins (CASP) family. In terms of assembly, homodimer and heterodimers.

The protein localises to the cell membrane. Functionally, regulates membrane-cell wall junctions and localized cell wall deposition. Required for establishment of the Casparian strip membrane domain (CSD) and the subsequent formation of Casparian strips, a cell wall modification of the root endodermis that determines an apoplastic barrier between the intraorganismal apoplasm and the extraorganismal apoplasm and prevents lateral diffusion. In Medicago truncatula (Barrel medic), this protein is Casparian strip membrane protein 2.